The chain runs to 402 residues: MIIHPKVRGFICTTTHPLGCERNVLEQIAATRARGVRTDGPKKVLVIGASSGYGLASRITAAFGFGADTLGVFFEKPGTASKAGTAGWYNSAAFDKHAKAAGLYSKSINGDAFSDAAREKVIELIKTEMGGQVDLMVYSLASPVRKLPGSGEVKRSALKPIGQTYTATAIDTNKDTIIQASIEPASAQEIEDTVTVMGGQDWELWIDALEGAGVLADGARSVAFSYIGTEITWPIYWHGALGKAKVDLDHTAQRLNARLARRGGGANVAVLKSVVTQASAAIPVMPLYISMVYKIMKEKGLHEGTIEQLDRLFRERLYREDGQPAQVDDENRLRLDDWELRDDVQDACKALWPQVTTENLFELTDYAGYKHEFLKLFGFERTDVDYDADVATDVSFDCIELG.

Residues 48 to 53, 74 to 75, 111 to 112, and 140 to 141 each bind NAD(+); these read GASSGY, FE, DA, and LA. Y226 contributes to the substrate binding site. Catalysis depends on Y236, which acts as the Proton donor. NAD(+) is bound by residues K245 and 274-276; that span reads VVT.

It belongs to the TER reductase family. In terms of assembly, monomer.

It carries out the reaction a 2,3-saturated acyl-[ACP] + NAD(+) = a (2E)-enoyl-[ACP] + NADH + H(+). It functions in the pathway lipid metabolism; fatty acid biosynthesis. Involved in the final reduction of the elongation cycle of fatty acid synthesis (FAS II). Catalyzes the reduction of a carbon-carbon double bond in an enoyl moiety that is covalently linked to an acyl carrier protein (ACP). The chain is Enoyl-[acyl-carrier-protein] reductase [NADH] from Xanthomonas axonopodis pv. citri (strain 306).